Here is a 389-residue protein sequence, read N- to C-terminus: (+)-bicyclogermacrene synthase TS4 (389 aa).

D136, E140, H284, G288, and D292 together coordinate Mg(2+). Residues 136–140 carry the DDxx(x)D/E motif motif; that stretch reads DEVCE. The NDxxSxxxD/E motif motif lies at 284-292; sequence HDFIGLQKD.

It belongs to the terpene synthase family.

The enzyme catalyses (2E,6E)-farnesyl diphosphate = bicyclogermacrene + diphosphate. Catalyzes the cyclization of trans,trans-farnesyl diphosphate (FPP) to the bicyclic sesquiterpene bicyclogermacrene. In Penicillium expansum (Blue mold rot fungus), this protein is (+)-bicyclogermacrene synthase TS4.